The following is a 686-amino-acid chain: Leucine-rich repeat-containing protein 49 (686 aa).

7 LRR repeats span residues 113–134, 135–156, 157–178, 179–200, 201–222, 223–244, and 245–266; these read HLRL…SNLQ, RLIF…STLK, SLRV…ENLK, NLDV…NHLC, DLRV…NGLD, SLTE…DNLP, and CLQR…SCLA. The LRRCT domain maps to 279–317; sequence NPIAQESWYKHTVLQNMMQLRQLDMKRITEEERRVASVV. Disordered regions lie at residues 311 to 332 and 359 to 381; these read RRVA…HKQS and ASTQ…DGGN. Positions 319-341 form a coiled coil; the sequence is KKEEEKKRESHKQSLLKEKKRLT.

In terms of assembly, part of the neuronal tubulin polyglutamylase complex which contains TPGS1, TPGS2, TTLL1, LRRC49 and NICN1. Interacts with PCM1; TTLL1, TPGS1, TPGS2 and LRRC49.

It is found in the cytoplasm. The protein resides in the cytoskeleton. Its subcellular location is the microtubule organizing center. The protein localises to the centrosome. It localises to the centriolar satellite. Its function is as follows. Subunit of the tubulin polyglutamylase complex (TPGC). The complex mediates cilia and flagella polyglutamylation which is essential for their biogenesis and motility. This Mus musculus (Mouse) protein is Leucine-rich repeat-containing protein 49 (Lrrc49).